Consider the following 676-residue polypeptide: MFTVTPAKIYLNQEKTPVSEQFNDVYFSNQDGLAESEYVFQQGNHLWERWIVYQEKHFVIAETGFGTGLNFLAVTSLFRQFRQQYPDFPLKRLFFISFEKYPLPKDQLQQIHRLYPQFSALSQQLCDYCLDAIQGCQRFHFAETTLDLWFGDIADNLPQLGDYMQNRIDAWFLDGFSPSKNPQMWNDKLYQQIFYYSKPQGTFATFTAASAVRKGLISAGFEVQKRKGYGKKRECLCGIKNSTQQQNAKFPWYLNQPASLLSEDIAIIGGGIASLFTALSLLKRGAKVTLYCEDEQLALNASGNKQGAFYPQLSDDDDRNIRFYVHAFFYALQQLQWAIKQGIEFEHEFCGVALCAYDHKSAVKLAKISSYQWSKSLYQNLNKEQLSEKIGLPLDCAGGFIPQGAWLAPRQFVQNAFSYLQQLGLEIKTSQKITALDYRNLQWVLTNEQNETFNHQVVVLANGYQITDFVQTAKLPLYPVRGQVSQIPTSANLLKLKSVLCYDGYLTPADKMKQSHCLGASHIRNNKDRHFSHQEQRENQQKIQQNLASTDTDKNMDWLQDIDISANIARIGVRCSVRDRVPIMGNVPHFEQQCLDYRNIFNLRRRKQPIPDAAQWKNLYLIGALGSRGLTSAALLGETLASLIYAEPLPLSEDILHNLSPNRSWIRKLLKGTEIK.

Positions 1 to 241 (MFTVTPAKIY…KRECLCGIKN (241 aa)) are tRNA (mnm(5)s(2)U34)-methyltransferase. An FAD-dependent cmnm(5)s(2)U34 oxidoreductase region spans residues 268–676 (IGGGIASLFT…RKLLKGTEIK (409 aa)).

In the N-terminal section; belongs to the methyltransferase superfamily. tRNA (mnm(5)s(2)U34)-methyltransferase family. It in the C-terminal section; belongs to the DAO family. Requires FAD as cofactor.

Its subcellular location is the cytoplasm. The catalysed reaction is 5-aminomethyl-2-thiouridine(34) in tRNA + S-adenosyl-L-methionine = 5-methylaminomethyl-2-thiouridine(34) in tRNA + S-adenosyl-L-homocysteine + H(+). Functionally, catalyzes the last two steps in the biosynthesis of 5-methylaminomethyl-2-thiouridine (mnm(5)s(2)U) at the wobble position (U34) in tRNA. Catalyzes the FAD-dependent demodification of cmnm(5)s(2)U34 to nm(5)s(2)U34, followed by the transfer of a methyl group from S-adenosyl-L-methionine to nm(5)s(2)U34, to form mnm(5)s(2)U34. The protein is tRNA 5-methylaminomethyl-2-thiouridine biosynthesis bifunctional protein MnmC of Histophilus somni (strain 129Pt) (Haemophilus somnus).